A 264-amino-acid chain; its full sequence is Homeobox protein vent1 (264 aa).

Composition is skewed to basic and acidic residues over residues 16–26 (KEEATDGKDSM) and 44–59 (YAKEMPRKKDGQDVQE). Positions 16-140 (KEEATDGKDS…RLRTAFTPQQ (125 aa)) are disordered. Residues 60–80 (HTTSFQCSLGEQVINRPSANP) show a composition bias toward polar residues. Positions 117-130 (TEQREKSPKSDLQR) are enriched in basic and acidic residues. Positions 129 to 188 (QRRLRTAFTPQQISKLEQAFNKQRYLGAPERKKLATSLQLSEIQVKTWFQNRRMKLKRQI) form a DNA-binding region, homeobox.

Expressed in the ventral marginal zone of gastrulae. At stage 11.5, also expressed in the ventral region of the animal cap (ectoderm). At the end of gastrulation, predominantly localized to the ventral and lateral regions of the closing slit blastopore. At early tail bud stage, expression is maintained only in the forming proctodeum.

Its subcellular location is the nucleus. Transcriptional repressor. Cooperates with vent2 in a ventral signaling pathway downstream of bmp4, which antagonizes the Spemann organizer and dorsal mesoderm formation, and leads to ventral mesoderm formation. Acts downstream of bmp4 to repress transcription of foxa4-B/XFD-1'. Binds to DNA with preference for the target sequence 5'-CTATT[T/C]G-3'. Also binds 5'-TGCATTTTG-3' at a lower frequency, and occasionally 5'-TTGATC-3'. Binds to the homeobox 2 (HBX2) repressor element in the promoter of the myf5 gene and represses myf5 transcription in the ventral domain. The sequence is that of Homeobox protein vent1 (vent1) from Xenopus laevis (African clawed frog).